A 562-amino-acid polypeptide reads, in one-letter code: NAD-dependent malic enzyme (562 aa).

Tyr101 (proton donor) is an active-site residue. Position 154 (Arg154) interacts with NAD(+). The active-site Proton acceptor is the Lys172. A divalent metal cation is bound by residues Glu243, Asp244, and Asp267. 2 residues coordinate NAD(+): Asp267 and Asn415.

This sequence belongs to the malic enzymes family. As to quaternary structure, homotetramer. Mg(2+) serves as cofactor. Mn(2+) is required as a cofactor.

The catalysed reaction is (S)-malate + NAD(+) = pyruvate + CO2 + NADH. It carries out the reaction oxaloacetate + H(+) = pyruvate + CO2. This is NAD-dependent malic enzyme from Shewanella woodyi (strain ATCC 51908 / MS32).